A 730-amino-acid polypeptide reads, in one-letter code: MAGEQHAQPTSVPAEAREKHAQLAEQIEEHRFRYYVKDAPVVSDAEFDTLLRSLEALEEEYPELRTPDSPTQKVAGGYETEFTAVQHRERMLSLDNAFDDLGLAAWAERVAKDVGTSDYHFLCELKVDGLAVNLTYEHGRLTRAATRGDGRTGEDITPNVRTIAEIPDRLKGDRIPDLVEIRGEVYFPMEKFEELNARLVEAGDKPFANPRNAAAGSLRQKDPRVTATRPLHMVVHGIGARQGFDIDRLSQAYELLREWGLPTTRYARVVDDLDGVREFIAYYGENRHSVEHEIDGVVVKLDEIPLQGRLGSTSRAPRWAIAWKYAPEEVNTKLINIRVGVGRTGRVTPYAQVEPVTVAGSEVEFATLHNQDVVKAKGVLIGDTVVLRKAGDVIPEILGPVVDLRDGTERAFVMPAECPECGTPLAPAKEGDVDLRCPNARTCPAQLRERLFYLAGRKSLDIEQFGYVAAAALTKPLEPAEPPLLDEGDLFDLTIERLLPIKAYVLDQDSGLPKRDPKTGEEKVATVFANQQGEPRKNAISMLDNIAAAKERPLARILTGLSIRHVGPVAAEALARAFRSIDRIDQATEEELKDTDGVGPIVAAAVKQWFAEDWHREIIRKWKAAGVRMEDERSGEDEGPRPLEGLTVVVTGTLEHHTRDGAKEALQSRGAKVTGSVSKKTSFVVVGDNPGSKYDKAMQLKVPVLNEAGFAVLLEQGPEAAAEVALPTEE.

The disordered stretch occupies residues 1 to 23 (MAGEQHAQPTSVPAEAREKHAQL). NAD(+)-binding positions include 44 to 48 (DAEFD), 93 to 94 (SL), and Glu124. Residue Lys126 is the N6-AMP-lysine intermediate of the active site. Residues Arg147, Glu184, Lys300, and Lys324 each coordinate NAD(+). The Zn(2+) site is built by Cys418, Cys421, Cys437, and Cys443. The BRCT domain maps to 638 to 727 (EGPRPLEGLT…PEAAAEVALP (90 aa)).

This sequence belongs to the NAD-dependent DNA ligase family. LigA subfamily. Mg(2+) is required as a cofactor. Mn(2+) serves as cofactor.

It catalyses the reaction NAD(+) + (deoxyribonucleotide)n-3'-hydroxyl + 5'-phospho-(deoxyribonucleotide)m = (deoxyribonucleotide)n+m + AMP + beta-nicotinamide D-nucleotide.. Functionally, DNA ligase that catalyzes the formation of phosphodiester linkages between 5'-phosphoryl and 3'-hydroxyl groups in double-stranded DNA using NAD as a coenzyme and as the energy source for the reaction. It is essential for DNA replication and repair of damaged DNA. The protein is DNA ligase of Streptomyces avermitilis (strain ATCC 31267 / DSM 46492 / JCM 5070 / NBRC 14893 / NCIMB 12804 / NRRL 8165 / MA-4680).